A 525-amino-acid chain; its full sequence is Estrogen receptor (525 aa).

Positions 1-59 are disordered; the sequence is PTSPLVFVPSSPRLSPFMHPPSHHYLETTSTPVYRSSVSSSQQQLSREDQCGTSDDSYS. Positions 1–82 are modulating; that stretch reads PTSPLVFVPS…GFEMAKEMRF (82 aa). Residues 36 to 45 show a composition bias toward low complexity; sequence SSVSSSQQQL. NR C4-type zinc fingers lie at residues 83-103 and 119-143; these read CAVC…CEGC and CPAT…LRKC. The nuclear receptor DNA-binding region spans 83–148; sequence CAVCSDYASG…RLRKCYQVGM (66 aa). A hinge region spans residues 149–209; the sequence is MKGGVRKDRG…GGGKSSIIGM (61 aa). A compositionally biased stretch (basic and acidic residues) spans 154–182; the sequence is RKDRGRVLRRDKRRTGTSDKASKDLEHRT. Residues 154–203 form a disordered region; sequence RKDRGRVLRRDKRRTGTSDKASKDLEHRTAPPQDRRKHSSSSSSAGGGGK. The region spanning 210 to 446 is the NR LBD domain; the sequence is SPDQVLLLLQ…DLLLEMLDAH (237 aa). Over residues 452–465 the composition is skewed to basic and acidic residues; that stretch reads DRPAESWSQADREP. Residues 452 to 525 are disordered; that stretch reads DRPAESWSQA…GPRSDCTHIL (74 aa). The segment covering 479-493 has biased composition (gly residues); that stretch reads SGGGDGGPSSAGSGS.

This sequence belongs to the nuclear hormone receptor family. NR3 subfamily. In terms of assembly, binds DNA as a homodimer. Can form a heterodimer with ER-beta. Abundant in the liver, less abundant in the testes and barely detectable in the ovary and brain.

It localises to the nucleus. The steroid hormones and their receptors are involved in the regulation of eukaryotic gene expression and affect cellular proliferation and differentiation in target tissues. This Micropogonias undulatus (Atlantic croaker) protein is Estrogen receptor (esr1).